The chain runs to 322 residues: MDSIHGHYHIQLSNYSAGENLQSATPPEGVIGAHRVKVETALSHSNRQKKLSATIKHNQSSRSMLDRKLTSDGKVNQRSSFTFSMIMYRMIHFVLSTRVPAVRESVANYGGNINFKFAQTKGAFLHQIIKHSDTARGACEALCAHWIRSHAQGQSLFDQLYVGGRKGKFQIDTLYSIKQLQIDGCKADVDQDEVTLDWLKKNGISERMIERHCLLPTVDVTGTTGSEGPDQLLNAILDTNGIGYGYKKISLSGQMSGHTIAAYVNENSGVTFFDPNFGEFHFSDKEKFSKWFTNSFWENSMYHYPLGVGQSFSVFTFDSKEV.

The disordered stretch occupies residues 42–69 (LSHSNRQKKLSATIKHNQSSRSMLDRKL). Catalysis depends on residues Cys-139, His-258, and Asp-274.

This sequence belongs to the peptidase C58 family. Interacts with human ARHA.

The protein localises to the secreted. Functionally, cysteine protease, which is translocated into infected cells and plays a central role in pathogenesis by cleaving the C-terminus end of the human small GTPase RhoA/ARHA, a regulator of cytoskeleton. Once cleaved, ARHA loses its lipid modification, and is released from the cell membrane, leading to the subsequent disruption of actin cytoskeleton of the host cell. In Yersinia enterocolitica serotype O:8 / biotype 1B (strain NCTC 13174 / 8081), this protein is Cysteine protease yopT1 (yopT1).